Here is a 478-residue protein sequence, read N- to C-terminus: Stromelysin-1 (478 aa).

An N-terminal signal peptide occupies residues M1 to A17. Positions Y18–H100 are cleaved as a propeptide — activation peptide. The Cysteine switch motif lies at P91–V98. Residue C93 coordinates Zn(2+). Residues D125 and D159 each coordinate Ca(2+). The Zn(2+) site is built by H169 and D171. D176, G177, G179, and V181 together coordinate Ca(2+). Position 184 (H184) interacts with Zn(2+). G191, N193, and D195 together coordinate Ca(2+). Residue H197 coordinates Zn(2+). Residues D199, D200, and E202 each contribute to the Ca(2+) site. H219 serves as a coordination point for Zn(2+). Residue E220 is part of the active site. Zn(2+)-binding residues include H223 and H229. Hemopexin repeat units follow at residues P288 to L337, P338 to S384, I386 to I434, and N435 to C478. A disulfide bridge links C291 with C478. Residue D298 coordinates Ca(2+). D390 and D439 together coordinate Ca(2+).

This sequence belongs to the peptidase M10A family. Requires Ca(2+) as cofactor. Zn(2+) serves as cofactor.

The protein localises to the secreted. It is found in the extracellular space. It localises to the extracellular matrix. The catalysed reaction is Preferential cleavage where P1', P2' and P3' are hydrophobic residues.. Metalloproteinase with a rather broad substrate specificity that can degrade fibronectin, laminin, gelatins of type I, III, IV, and V; collagens III, IV, X, and IX, and cartilage proteoglycans. Activates different molecules including growth factors, plasminogen or other matrix metalloproteinases such as MMP9. Once released into the extracellular matrix (ECM), the inactive pro-enzyme is activated by the plasmin cascade signaling pathway. Also acts intracellularly. For example, in dopaminergic neurons, gets activated by the serine protease HTRA2 upon stress and plays a pivotal role in DA neuronal degeneration by mediating microglial activation and alpha-synuclein/SNCA cleavage. In addition, plays a role in immune response and possesses antiviral activity against various viruses. Mechanistically, translocates from the cytoplasm into the cell nucleus upon virus infection to influence NF-kappa-B activities. The protein is Stromelysin-1 (MMP3) of Oryctolagus cuniculus (Rabbit).